We begin with the raw amino-acid sequence, 241 residues long: DNA repair protein RecO (241 aa).

The protein belongs to the RecO family.

Its function is as follows. Involved in DNA repair and RecF pathway recombination. The chain is DNA repair protein RecO from Roseobacter denitrificans (strain ATCC 33942 / OCh 114) (Erythrobacter sp. (strain OCh 114)).